Reading from the N-terminus, the 294-residue chain is Enoyl-CoA hydratase domain-containing protein 3, mitochondrial (294 aa).

The transit peptide at 1–61 (MSWLRSCGER…IILNNPQQRN (61 aa)) directs the protein to the mitochondrion.

This sequence belongs to the enoyl-CoA hydratase/isomerase family.

It is found in the mitochondrion. May play a role in fatty acid biosynthesis and insulin sensitivity. In Xenopus laevis (African clawed frog), this protein is Enoyl-CoA hydratase domain-containing protein 3, mitochondrial (echdc3).